Reading from the N-terminus, the 189-residue chain is Glucose-6-phosphate isomerase (189 aa).

Fe cation-binding residues include histidine 88, histidine 90, glutamate 97, and histidine 136.

This sequence belongs to the archaeal-type GPI family. As to quaternary structure, homodimer.

It is found in the cytoplasm. It carries out the reaction alpha-D-glucose 6-phosphate = beta-D-fructose 6-phosphate. It functions in the pathway carbohydrate degradation; glycolysis; D-glyceraldehyde 3-phosphate and glycerone phosphate from D-glucose: step 2/4. The protein is Glucose-6-phosphate isomerase of Thermococcus gammatolerans (strain DSM 15229 / JCM 11827 / EJ3).